The following is a 115-amino-acid chain: NADH-ubiquinone oxidoreductase chain 3 (115 aa).

The next 3 membrane-spanning stretches (helical) occupy residues 3–23, 55–75, and 87–107; these read LVIA…VAFW, FFLV…LLPI, and LLSL…YEWL.

It belongs to the complex I subunit 3 family. In terms of assembly, core subunit of respiratory chain NADH dehydrogenase (Complex I) which is composed of 45 different subunits. Interacts with TMEM186. Interacts with TMEM242.

The protein resides in the mitochondrion inner membrane. The enzyme catalyses a ubiquinone + NADH + 5 H(+)(in) = a ubiquinol + NAD(+) + 4 H(+)(out). In terms of biological role, core subunit of the mitochondrial membrane respiratory chain NADH dehydrogenase (Complex I) which catalyzes electron transfer from NADH through the respiratory chain, using ubiquinone as an electron acceptor. Essential for the catalytic activity of complex I. The sequence is that of NADH-ubiquinone oxidoreductase chain 3 from Ornithorhynchus anatinus (Duckbill platypus).